Consider the following 323-residue polypeptide: Putative HTH-type transcriptional regulatory protein Hlac_0273 (323 aa).

An HTH cro/C1-type domain is found at 132–189 (LADEREERGWSLGRLATELGVSRRTVSKYEDGMNASIEVAIQLEDLFNEPFSSPVDVL). Positions 143–162 (LGRLATELGVSRRTVSKYED) form a DNA-binding region, H-T-H motif. Residues 188–211 (VLDGAGEVRDADPTPSAPETDPDD) are disordered.

The polypeptide is Putative HTH-type transcriptional regulatory protein Hlac_0273 (Halorubrum lacusprofundi (strain ATCC 49239 / DSM 5036 / JCM 8891 / ACAM 34)).